The chain runs to 204 residues: Large ribosomal subunit protein eL15 (204 aa).

The protein belongs to the eukaryotic ribosomal protein eL15 family. Component of the large ribosomal subunit.

The protein resides in the cytoplasm. Functionally, component of the large ribosomal subunit. The ribosome is a large ribonucleoprotein complex responsible for the synthesis of proteins in the cell. The chain is Large ribosomal subunit protein eL15 (rpl15) from Anguilla japonica (Japanese eel).